We begin with the raw amino-acid sequence, 194 residues long: Protein LKAAEAR1 (194 aa).

A disordered region spans residues 1–45 (MPPPAKEGGRKGPRERSGKSAPGTAQGEERAKGAPATEPPKPGWA). A compositionally biased stretch (basic and acidic residues) spans 7–18 (EGGRKGPRERSG).

In Homo sapiens (Human), this protein is Protein LKAAEAR1 (LKAAEAR1).